Here is a 323-residue protein sequence, read N- to C-terminus: tRNA-cytidine(32) 2-sulfurtransferase (323 aa).

The PP-loop motif motif lies at 49-54 (SGGKDS). The [4Fe-4S] cluster site is built by Cys124, Cys127, and Cys215.

Belongs to the TtcA family. As to quaternary structure, homodimer. Mg(2+) is required as a cofactor. [4Fe-4S] cluster serves as cofactor.

The protein resides in the cytoplasm. The enzyme catalyses cytidine(32) in tRNA + S-sulfanyl-L-cysteinyl-[cysteine desulfurase] + AH2 + ATP = 2-thiocytidine(32) in tRNA + L-cysteinyl-[cysteine desulfurase] + A + AMP + diphosphate + H(+). Its pathway is tRNA modification. Catalyzes the ATP-dependent 2-thiolation of cytidine in position 32 of tRNA, to form 2-thiocytidine (s(2)C32). The sulfur atoms are provided by the cysteine/cysteine desulfurase (IscS) system. The chain is tRNA-cytidine(32) 2-sulfurtransferase from Shewanella denitrificans (strain OS217 / ATCC BAA-1090 / DSM 15013).